A 1048-amino-acid polypeptide reads, in one-letter code: Self-sufficient cytochrome P450 monooxygenase CYP505E4 (1048 aa).

Residue C405 coordinates heme. The region spanning 499-640 (VSFFYGSNSG…DLEVWEETNL (142 aa)) is the Flavodoxin-like domain. FMN is bound by residues 505–509 (SNSGT) and 584–616 (VFGC…TRLA). Positions 678-906 (RDLIEAKVTA…RPAKDAFHLP (229 aa)) constitute an FAD-binding FR-type domain.

It in the N-terminal section; belongs to the cytochrome P450 family. FAD serves as cofactor. The cofactor is FMN. Requires heme as cofactor.

It catalyses the reaction 2 oxidized [cytochrome P450] + NADPH = 2 reduced [cytochrome P450] + NADP(+) + H(+). It carries out the reaction an organic molecule + reduced [NADPH--hemoprotein reductase] + O2 = an alcohol + oxidized [NADPH--hemoprotein reductase] + H2O + H(+). The enzyme catalyses dodecanoate + reduced [NADPH--hemoprotein reductase] + O2 = 5-hydroxydodecanoate + oxidized [NADPH--hemoprotein reductase] + H2O + H(+). The catalysed reaction is tetradecanoate + reduced [NADPH--hemoprotein reductase] + O2 = 7-hydroxytetradecanoate + oxidized [NADPH--hemoprotein reductase] + H2O + H(+). It catalyses the reaction dodecan-1-ol + reduced [NADPH--hemoprotein reductase] + O2 = 1,5-dodecanediol + oxidized [NADPH--hemoprotein reductase] + H2O + H(+). It carries out the reaction dodecan-1-ol + reduced [NADPH--hemoprotein reductase] + O2 = 1,4-dodecanediol + oxidized [NADPH--hemoprotein reductase] + H2O + H(+). The enzyme catalyses dodecan-1-ol + reduced [NADPH--hemoprotein reductase] + O2 = 1,6-dodecanediol + oxidized [NADPH--hemoprotein reductase] + H2O + H(+). Self-sufficient cytochrome P450 monooxygenase that catalyzes the regioselective in-chain hydroxylation of alkanes, fatty alcohols, and fatty acids at the omega-7 position. Performs hydroxylation of C10-C16 n-alkanes and C12 and C14 fatty alcohols; and thereby enables the one step biocatalytic synthesis of rare alcohols such as 5-dodecanol and 7-tetradecanol. Converts 1-dodecanol into 1,5-dodecanediol as major product with very little sub-terminally hydroxylated products with the 1,4-dodecanediol and 1,6-dodecanediol more abundant. Converts dodecanoic acid to 5-hydroxydodecanoic acid which can be further converted into delta-dodecalactone by lactonization of the 5-hydroxy acid at low pH. Also gives sub-terminal hydroxylation of dodecanoic acid with 9-hydroxydodecanoic acid being the second most abundant product. This chain is Self-sufficient cytochrome P450 monooxygenase CYP505E4, found in Penicillium expansum (Blue mold rot fungus).